The following is a 725-amino-acid chain: Heme/hemopexin utilization protein C (725 aa).

The N-terminal stretch at 1-21 is a signal peptide; it reads MRFSKLSLAIATTLVTANALA. The TBDR plug domain maps to 36–147; that stretch reads DPSRFAYTPE…LGGVVAMRTP (112 aa). The 568-residue stretch at 158-725 folds into the TBDR beta-barrel domain; that stretch reads KFGVKIRQGY…NAKISAVYSF (568 aa). Residues 708–725 carry the TonB C-terminal box motif; the sequence is SLMEGTGRNAKISAVYSF.

It belongs to the TonB-dependent receptor family.

The protein resides in the cell outer membrane. In terms of biological role, required for utilization of free heme at low concentrations. In Haemophilus influenzae, this protein is Heme/hemopexin utilization protein C (hxuC).